The primary structure comprises 162 residues: uncharacterized protein (162 aa).

The region spanning 6 to 78 (LDDLDRNILR…ALIVLEVGKP (73 aa)) is the HTH asnC-type domain. The segment at residues 25-44 (ISELSEQLKKPESTIHFRIK) is a DNA-binding region (H-T-H motif).

This is an uncharacterized protein from Pyrococcus furiosus (strain ATCC 43587 / DSM 3638 / JCM 8422 / Vc1).